Reading from the N-terminus, the 418-residue chain is Homocitrate synthase, mitochondrial (418 aa).

Over residues 1 to 10 (MSVSEANGTE) the composition is skewed to polar residues. The disordered stretch occupies residues 1-25 (MSVSEANGTETIKPPMNGNPYGPNP). Residues 14 to 25 (PPMNGNPYGPNP) are compositionally biased toward low complexity. One can recognise a Pyruvate carboxyltransferase domain in the interval 35 to 288 (FSIIESTLRE…THKYKLNQLR (254 aa)). Residues Arg43, Glu44, and His103 each contribute to the 2-oxoglutarate site. Glu44 is a binding site for L-lysine. Position 44 (Glu44) interacts with Zn(2+). Asp123 provides a ligand contact to L-lysine. Residues Arg163, Ser165, Thr197, His224, and His226 each coordinate 2-oxoglutarate. Thr197 contacts L-lysine. Residues His224 and His226 each contribute to the Zn(2+) site. His321 acts as the Proton acceptor in catalysis.

The protein belongs to the alpha-IPM synthase/homocitrate synthase family. Homocitrate synthase LYS20/LYS21 subfamily. It depends on Mg(2+) as a cofactor. The cofactor is Mn(2+). Requires Zn(2+) as cofactor. Co(2+) is required as a cofactor.

The protein localises to the mitochondrion. The enzyme catalyses acetyl-CoA + 2-oxoglutarate + H2O = (2R)-homocitrate + CoA + H(+). The protein operates within amino-acid biosynthesis; L-lysine biosynthesis via AAA pathway; L-alpha-aminoadipate from 2-oxoglutarate: step 1/5. Its activity is regulated as follows. The activity is controled by feedback inhibition by L-lysine, the final product of the pathway that acts as a competitive inhibitor of 2-oxoglutarate. Catalyzes the aldol-type condensation of 2-oxoglutarate with acetyl-CoA to yield homocitrate, the first step of the alpha-aminoadipate (AAA) lysine biosynthesis pathway. In Schizosaccharomyces pombe (strain 972 / ATCC 24843) (Fission yeast), this protein is Homocitrate synthase, mitochondrial.